A 476-amino-acid polypeptide reads, in one-letter code: Calcitonin gene-related peptide type 1 receptor (476 aa).

Positions 1-33 (METLQMGLLSRSALFKYIIIFLIMINTRGYVLA) are cleaved as a signal peptide. Residues 34–154 (SQEQEAKTSV…FTHEKVKTAL (121 aa)) lie on the Extracellular side of the membrane. Intrachain disulfides connect Cys-63/Cys-89, Cys-80/Cys-120, and Cys-103/Cys-142. N-linked (GlcNAc...) asparagine glycosylation is found at Asn-81, Asn-133, and Asn-138. A helical membrane pass occupies residues 155 to 179 (NLYYLTIIGHGLSIASLLISLGIFF). Residues 180 to 190 (YFKNLSCQRIT) are Cytoplasmic-facing. A helical membrane pass occupies residues 191 to 213 (LHKNLFFSFVCNSIITIISLSAV). The Extracellular portion of the chain corresponds to 214–224 (ANNQALVATNP). A helical membrane pass occupies residues 225–253 (VICKISQFIHLYLMGCNYFWMLCEGIYLH). Topologically, residues 254–267 (TLIVVAVFAEKQHL) are cytoplasmic. Residues 268–288 (MWYYLLGWGFPLIPACIHAVA) traverse the membrane as a helical segment. Residues 289–304 (RSLYYNDNCWISSETH) are Extracellular-facing. Residues 305–329 (LLYIIHGPICAALLVNLFFLLNIVR) form a helical membrane-spanning segment. Residues 330–344 (VLITKLKVTHQAESN) are Cytoplasmic-facing. The helical transmembrane segment at 345–366 (LYMKAVRATLILVPLLGIEFVL) threads the bilayer. Residues 367–381 (FPWKPEGRIAEEIYD) are Extracellular-facing. Residues 382 to 402 (YVMHILMHYQGLLVATIFCFF) traverse the membrane as a helical segment. At 403–476 (NGEVQAVLKR…VFFKTEKQYM (74 aa)) the chain is on the cytoplasmic side.

Belongs to the G-protein coupled receptor 2 family.

It is found in the cell membrane. Its function is as follows. May function as G protein-coupled receptor for calcitonin-gene-related peptides and adrenomedullin. Specificity may be modulated by accessory proteins. May activate cAMP-dependent pathway. The sequence is that of Calcitonin gene-related peptide type 1 receptor (calcrl) from Xenopus laevis (African clawed frog).